A 404-amino-acid chain; its full sequence is Cysteine desulfurase IscS (404 aa).

Pyridoxal 5'-phosphate is bound by residues 75-76, asparagine 155, glutamine 183, and 203-205; these read AT and SAH. Position 206 is an N6-(pyridoxal phosphate)lysine (lysine 206). Threonine 243 contacts pyridoxal 5'-phosphate. Cysteine 328 serves as the catalytic Cysteine persulfide intermediate. Cysteine 328 contributes to the [2Fe-2S] cluster binding site.

It belongs to the class-V pyridoxal-phosphate-dependent aminotransferase family. NifS/IscS subfamily. In terms of assembly, homodimer. Forms a heterotetramer with IscU, interacts with other sulfur acceptors. The cofactor is pyridoxal 5'-phosphate.

It is found in the cytoplasm. The enzyme catalyses (sulfur carrier)-H + L-cysteine = (sulfur carrier)-SH + L-alanine. It functions in the pathway cofactor biosynthesis; iron-sulfur cluster biosynthesis. In terms of biological role, master enzyme that delivers sulfur to a number of partners involved in Fe-S cluster assembly, tRNA modification or cofactor biosynthesis. Catalyzes the removal of elemental sulfur atoms from cysteine to produce alanine. Functions as a sulfur delivery protein for Fe-S cluster synthesis onto IscU, an Fe-S scaffold assembly protein, as well as other S acceptor proteins. The polypeptide is Cysteine desulfurase IscS (Ruthia magnifica subsp. Calyptogena magnifica).